A 396-amino-acid chain; its full sequence is Gap junction gamma-1 protein (396 aa).

Over 1–22 (MSWSFLTRLLEEIHNHSTFVGK) the chain is Cytoplasmic. A helical membrane pass occupies residues 23–45 (IWLTVLIAFRIALTAVGGESIYY). The Extracellular segment spans residues 46-75 (DEQSKFVCNTEQPGCENVCYDAFAPLSHVR). The chain crosses the membrane as a helical span at residues 76–95 (FWVFQIILVATPSVMYLGYA). At 96-175 (IHKIAKMEHG…RRIREDGLMK (80 aa)) the chain is on the cytoplasmic side. Residues 145–165 (ELESEKENKEQNQPKPKHDGR) form a disordered region. A compositionally biased stretch (basic and acidic residues) spans 147–156 (ESEKENKEQN). The helical transmembrane segment at 176 to 198 (IYVLQLLARTVFEVGFLIGQYFL) threads the bilayer. Topologically, residues 199–228 (YGFQVHPFYVCSRLPCPHKIDCFISRPTEK) are extracellular. A helical membrane pass occupies residues 229–248 (TIFLLIMYGVTGLCLLLNIW). Over 249–396 (EMLHLGFGTI…SGDGKNSVWI (148 aa)) the chain is Cytoplasmic. The interval 355–396 (AYSHQNNPHGPREKKAKVGSKAGSNKSSASSKSGDGKNSVWI) is disordered. The span at 373–396 (GSKAGSNKSSASSKSGDGKNSVWI) shows a compositional bias: low complexity.

The protein belongs to the connexin family. Gamma-type subfamily. As to quaternary structure, a connexon is composed of a hexamer of connexins. Interacts with CNST.

It is found in the cell membrane. The protein resides in the cell junction. Its subcellular location is the gap junction. Functionally, one gap junction consists of a cluster of closely packed pairs of transmembrane channels, the connexons, through which materials of low MW diffuse from one cell to a neighboring cell. The polypeptide is Gap junction gamma-1 protein (GJC1) (Canis lupus familiaris (Dog)).